The primary structure comprises 322 residues: uncharacterized protein (322 aa).

The disordered stretch occupies residues 1 to 63 (MFKIRKRSVP…DEASSSDSHY (63 aa)). The segment covering 34-49 (FVDDHGKPIAEYRDFP) has biased composition (basic and acidic residues). The segment at 245-274 (WKVDRICTYYINRPDKCTRGDNCRFKHDDV) adopts a C3H1-type zinc-finger fold. Positions 278-322 (HRQKEIQSSRNQSWHHRTSSHKYSSENSDHRGYRRHRSRSPHARQ) are disordered. Positions 309-322 (GYRRHRSRSPHARQ) are enriched in basic residues.

This is an uncharacterized protein from Caenorhabditis elegans.